A 432-amino-acid polypeptide reads, in one-letter code: Probable M18 family aminopeptidase 2 (432 aa).

The Zn(2+) site is built by His86, His157, and His408.

Belongs to the peptidase M18 family. Requires Zn(2+) as cofactor.

The protein is Probable M18 family aminopeptidase 2 of Streptomyces avermitilis (strain ATCC 31267 / DSM 46492 / JCM 5070 / NBRC 14893 / NCIMB 12804 / NRRL 8165 / MA-4680).